The sequence spans 189 residues: GMP synthase [glutamine-hydrolyzing] subunit A (189 aa).

Residues 5 to 189 (KILVVNNYGQ…TNFLEICEKY (185 aa)) enclose the Glutamine amidotransferase type-1 domain. The active-site Nucleophile is C79. Residues H166 and E168 contribute to the active site.

In terms of assembly, heterodimer composed of a glutamine amidotransferase subunit (A) and a GMP-binding subunit (B).

The enzyme catalyses XMP + L-glutamine + ATP + H2O = GMP + L-glutamate + AMP + diphosphate + 2 H(+). The protein operates within purine metabolism; GMP biosynthesis; GMP from XMP (L-Gln route): step 1/1. Catalyzes the synthesis of GMP from XMP. The chain is GMP synthase [glutamine-hydrolyzing] subunit A from Methanosarcina barkeri (strain Fusaro / DSM 804).